Reading from the N-terminus, the 143-residue chain is Transcriptional regulator MraZ (143 aa).

SpoVT-AbrB domains are found at residues 5-47 (TYTP…PRSE) and 76-119 (TDEQ…DAQA).

It belongs to the MraZ family. Forms oligomers.

It is found in the cytoplasm. The protein localises to the nucleoid. The protein is Transcriptional regulator MraZ of Mycobacterium ulcerans (strain Agy99).